The following is a 687-amino-acid chain: Macrolide export ATP-binding/permease protein MacB (687 aa).

The region spanning 6–244 is the ABC transporter domain; sequence LKLAAVTRRF…LAEAGVDAAE (239 aa). 42–49 contributes to the ATP binding site; it reads GASGSGKS. Over residues 246–256 the composition is skewed to low complexity; that stretch reads AEASEAAVGES. Residues 246 to 281 form a disordered region; it reads AEASEAAVGESPTRNRHDTPAPPAAVDTDPHVDTGT. 4 consecutive transmembrane segments (helical) span residues 312-332, 560-580, 617-637, and 650-670; these read LLTM…VAIG, LTLL…IGVM, LVCL…GALF, and AGAI…FGFM.

It belongs to the ABC transporter superfamily. Macrolide exporter (TC 3.A.1.122) family. Homodimer.

The protein resides in the cell inner membrane. Functionally, non-canonical ABC transporter that contains transmembrane domains (TMD), which form a pore in the inner membrane, and an ATP-binding domain (NBD), which is responsible for energy generation. Confers resistance against macrolides. This chain is Macrolide export ATP-binding/permease protein MacB, found in Burkholderia lata (strain ATCC 17760 / DSM 23089 / LMG 22485 / NCIMB 9086 / R18194 / 383).